A 103-amino-acid chain; its full sequence is MFAIIETGGKQYKVQQGDVLKVEKLEANPGDVVEIDRVFAVSKDGELKVGAPTVEGAKVLLKVEDHGKGKKIIIFKYKPKKNYRRKQGHRQAFTQVRVEAIQA.

The protein belongs to the bacterial ribosomal protein bL21 family. Part of the 50S ribosomal subunit. Contacts protein L20.

This protein binds to 23S rRNA in the presence of protein L20. In Heliobacterium modesticaldum (strain ATCC 51547 / Ice1), this protein is Large ribosomal subunit protein bL21.